The chain runs to 330 residues: ADP-L-glycero-D-manno-heptose-6-epimerase (330 aa).

Residues 11 to 12 (FI), 32 to 33 (DN), Lys-39, Lys-54, 75 to 79 (EGACS), and Asn-92 contribute to the NADP(+) site. Tyr-139 functions as the Proton acceptor in the catalytic mechanism. Lys-143 lines the NADP(+) pocket. Asn-168 serves as a coordination point for substrate. NADP(+)-binding residues include Val-169 and Lys-177. The active-site Proton acceptor is Lys-177. Residues Arg-179, His-186, 200-203 (FGEY), Arg-213, and Tyr-292 contribute to the substrate site.

Belongs to the NAD(P)-dependent epimerase/dehydratase family. HldD subfamily. As to quaternary structure, homopentamer. The cofactor is NADP(+).

The catalysed reaction is ADP-D-glycero-beta-D-manno-heptose = ADP-L-glycero-beta-D-manno-heptose. Its pathway is nucleotide-sugar biosynthesis; ADP-L-glycero-beta-D-manno-heptose biosynthesis; ADP-L-glycero-beta-D-manno-heptose from D-glycero-beta-D-manno-heptose 7-phosphate: step 4/4. Functionally, catalyzes the interconversion between ADP-D-glycero-beta-D-manno-heptose and ADP-L-glycero-beta-D-manno-heptose via an epimerization at carbon 6 of the heptose. The polypeptide is ADP-L-glycero-D-manno-heptose-6-epimerase (Burkholderia cenocepacia (strain ATCC BAA-245 / DSM 16553 / LMG 16656 / NCTC 13227 / J2315 / CF5610) (Burkholderia cepacia (strain J2315))).